The primary structure comprises 88 residues: Large ribosomal subunit protein bL27 (88 aa).

The disordered stretch occupies residues 1–21 (MAHKKGVGSSRNGRDSQPKML).

The protein belongs to the bacterial ribosomal protein bL27 family.

The polypeptide is Large ribosomal subunit protein bL27 (Pelotomaculum thermopropionicum (strain DSM 13744 / JCM 10971 / SI)).